The chain runs to 312 residues: Bifunctional pinoresinol-lariciresinol reductase (312 aa).

NADP(+)-binding positions include 10-16, arginine 35, and lysine 44; that span reads GGTGYIG. The active-site Proton acceptor is the lysine 136. NADP(+) is bound at residue arginine 140. Histidine 268 contacts substrate.

It belongs to the NmrA-type oxidoreductase family. Isoflavone reductase subfamily. Dimer. Expressed in seed coats, but not in embryos, leaves, stems and roots.

Reductase involved in lignan biosynthesis. Catalyzes the sequential conversion of pinoresinol into lariciresinol and of lariciresinol into secoisolariciresinol. Abstracts the 4R-hydride from the NADPH cofactor during catalysis. The chain is Bifunctional pinoresinol-lariciresinol reductase from Linum usitatissimum (Flax).